Reading from the N-terminus, the 504-residue chain is Anaerobic nitric oxide reductase transcription regulator NorR (504 aa).

D57 is subject to 4-aspartylphosphate. The region spanning 187–416 (MIGLSPGMTQ…LEHAIHRAVV (230 aa)) is the Sigma-54 factor interaction domain. ATP-binding positions include 215–222 (GETGTGKE) and 278–287 (ADNGTLFLDE). Positions 479 to 498 (WAACARMLETDVANLHRLAK) form a DNA-binding region, H-T-H motif.

It functions in the pathway nitrogen metabolism; nitric oxide reduction. Its function is as follows. Required for the expression of anaerobic nitric oxide (NO) reductase, acts as a transcriptional activator for at least the norVW operon. Activation also requires sigma-54. The polypeptide is Anaerobic nitric oxide reductase transcription regulator NorR (Shigella sonnei (strain Ss046)).